A 375-amino-acid polypeptide reads, in one-letter code: Glutamate 5-kinase (375 aa).

K13 contributes to the ATP binding site. 3 residues coordinate substrate: S54, D141, and N153. ATP-binding positions include 173 to 174 (TD) and 216 to 222 (TGGMATK). Positions 281 to 359 (TGKIFIDAGA…EAIAAVLGYV (79 aa)) constitute a PUA domain.

It belongs to the glutamate 5-kinase family.

The protein localises to the cytoplasm. The catalysed reaction is L-glutamate + ATP = L-glutamyl 5-phosphate + ADP. Its pathway is amino-acid biosynthesis; L-proline biosynthesis; L-glutamate 5-semialdehyde from L-glutamate: step 1/2. Catalyzes the transfer of a phosphate group to glutamate to form L-glutamate 5-phosphate. This is Glutamate 5-kinase from Synechocystis sp. (strain ATCC 27184 / PCC 6803 / Kazusa).